We begin with the raw amino-acid sequence, 484 residues long: tRNA sulfurtransferase (484 aa).

The region spanning 63–167 (QGIRDRLSCM…DQRLFVVHDQ (105 aa)) is the THUMP domain. ATP is bound by residues 185-186 (LM), Lys267, Gly289, and Gln298. Cysteines 346 and 457 form a disulfide. The 79-residue stretch at 405-483 (ALAGQVIIDI…GHANVRVYRP (79 aa)) folds into the Rhodanese domain. Catalysis depends on Cys457, which acts as the Cysteine persulfide intermediate.

This sequence belongs to the ThiI family.

The protein localises to the cytoplasm. The catalysed reaction is [ThiI sulfur-carrier protein]-S-sulfanyl-L-cysteine + a uridine in tRNA + 2 reduced [2Fe-2S]-[ferredoxin] + ATP + H(+) = [ThiI sulfur-carrier protein]-L-cysteine + a 4-thiouridine in tRNA + 2 oxidized [2Fe-2S]-[ferredoxin] + AMP + diphosphate. The enzyme catalyses [ThiS sulfur-carrier protein]-C-terminal Gly-Gly-AMP + S-sulfanyl-L-cysteinyl-[cysteine desulfurase] + AH2 = [ThiS sulfur-carrier protein]-C-terminal-Gly-aminoethanethioate + L-cysteinyl-[cysteine desulfurase] + A + AMP + 2 H(+). It functions in the pathway cofactor biosynthesis; thiamine diphosphate biosynthesis. Catalyzes the ATP-dependent transfer of a sulfur to tRNA to produce 4-thiouridine in position 8 of tRNAs, which functions as a near-UV photosensor. Also catalyzes the transfer of sulfur to the sulfur carrier protein ThiS, forming ThiS-thiocarboxylate. This is a step in the synthesis of thiazole, in the thiamine biosynthesis pathway. The sulfur is donated as persulfide by IscS. The protein is tRNA sulfurtransferase of Pseudomonas syringae pv. tomato (strain ATCC BAA-871 / DC3000).